Here is a 1289-residue protein sequence, read N- to C-terminus: SH3 domain and tetratricopeptide repeat-containing protein 2 (1289 aa).

SH3 domains follow at residues 176–239 (EGHF…PLPV) and 267–330 (IGRG…LDSC). Residues 393-442 (SQPEGFREARSGGTWMERQTIGSRRSSGSGDSSPEEDELISASSDSYHLP) are disordered. Residues 414 to 424 (GSRRSSGSGDS) show a composition bias toward low complexity. 8 TPR repeats span residues 529 to 562 (ARLC…LDGA), 758 to 791 (RTLC…GKLL), 837 to 870 (GVVH…AREM), 1002 to 1038 (GQLL…FVDL), 1085 to 1119 (LKLY…LARR), 1120 to 1153 (MKAL…ATLA), 1167 to 1200 (LVAF…CPPW), and 1211 to 1245 (AKVY…AVLM).

The chain is SH3 domain and tetratricopeptide repeat-containing protein 2 (Sh3tc2) from Mus musculus (Mouse).